The sequence spans 428 residues: Cyclic AMP-responsive element-binding protein 3-like protein 4 (428 aa).

A required for transcriptional activation region spans residues 1-68; sequence MLLGSLFEQT…EFLQMMINPN (68 aa). Residues 1 to 294 are Cytoplasmic-facing; the sequence is MLLGSLFEQT…QTSNKAAQTS (294 aa). The interval 71-111 is disordered; the sequence is YSTGPAAAESPESDSGFSDDPRPDTPPQSETSPPLPQPTPV. The 64-residue stretch at 216-279 folds into the bZIP domain; that stretch reads ILKKVRRKIR…ISLITQLRKL (64 aa). The tract at residues 218–247 is basic motif; sequence KKVRRKIRNKQSAQDSRRRKKEYIDGLESR. Residues 258 to 279 form a leucine-zipper region; sequence LHKKVVELEKHNISLITQLRKL. The helical; Signal-anchor for type II membrane protein transmembrane segment at 295–315 threads the bilayer; sequence TCVLILLFSLALLVFPSYSPF. The Lumenal portion of the chain corresponds to 316-428; it reads RSRPSASQED…LSKTARADEM (113 aa). Residues 339–428 form a disordered region; that stretch reads NKGGFSEVAD…LSKTARADEM (90 aa). Positions 354–368 are enriched in basic and acidic residues; sequence TLHRAQQREEGDPGR. Residue N418 is glycosylated (N-linked (GlcNAc...) asparagine).

Belongs to the bZIP family. ATF subfamily. In terms of assembly, binds DNA as a dimer. Controlled by regulated intramembrane proteolysis (RIP). A fragment containing the cytoplasmic transcription factor domain is released by proteolysis. The cleavage seems to be performed sequentially by site-1 and site-2 proteases (PS1 and PS2).

It is found in the endoplasmic reticulum membrane. Its subcellular location is the nucleus. Functionally, transcriptional activator. This is Cyclic AMP-responsive element-binding protein 3-like protein 4 (creb3l4) from Xenopus tropicalis (Western clawed frog).